A 458-amino-acid chain; its full sequence is MQVTAMDVYRLLPKTNCGKCNEASCMAFATKLIEKEVTLDDCPQLSGDERQKLENLLAPAVKEITFGPEENQVVVGGDEVLYRYELTYYNPTALVVDLPDDLPSEELLNRAQRIMELEFERTGEKLTLDAIALRNRSGSPEKFAEAAEAISKLNFPVVLCTFDVEAMKAALEVLGDQKPLLYAAREDNLGEMAELSVSYGCPLVLFSPGDLEEMKNLSRRLRSLGVTEIVLDPGTFTGEGIGDTIDNFVMIRRLAVEDGDDDFRFPIMGIPALSRLTVSDKIEANIREATVAATLMNRYADILILAGTEIWEIMPVLTLRQGLYTDPRKPQAVDPGVYEFGDVDENSPVILTTNFSLTYYTVEGDLKSGDVTAYLLVLDTEGRAVDVSLAGGQLNGPAVADLIKETGIEERVRDKVMIIPGLAAPASGEIEDDTGWRVLVGPRDSSGIPDYLDKLASE.

The 59-residue stretch at methionine 1–proline 59 folds into the 4Fe-4S domain. [4Fe-4S] cluster is bound by residues cysteine 17, cysteine 20, cysteine 25, and cysteine 42.

Heterodimer of delta and gamma chains. The ACDS complex is made up of alpha, epsilon, beta, gamma and delta chains with a probable stoichiometry of (alpha(2)epsilon(2))(4)-beta(8)-(gamma(1)delta(1))(8). Requires corrinoid as cofactor. It depends on [4Fe-4S] cluster as a cofactor.

The catalysed reaction is 5,6,7,8-tetrahydrosarcinapterin + methyl-Co(III)-[corrinoid Fe-S protein] = 5-methyltetrahydrosarcinapterin + Co(I)-[corrinoid Fe-S protein] + H(+). Functionally, part of a complex that catalyzes the reversible cleavage of acetyl-CoA, allowing autotrophic growth from CO(2). This is Acetyl-CoA decarbonylase/synthase complex subunit gamma from Methanothermobacter thermautotrophicus (strain ATCC 29096 / DSM 1053 / JCM 10044 / NBRC 100330 / Delta H) (Methanobacterium thermoautotrophicum).